Here is a 147-residue protein sequence, read N- to C-terminus: DNA-directed RNA polymerase RPB6 homolog (147 aa).

Belongs to the archaeal RpoK/eukaryotic RPB6 RNA polymerase subunit family. In terms of assembly, part of the viral DNA-directed RNA polymerase that consists of 8 polII-like subunits (RPB1, RPB2, RPB3, RPB5, RPB6, RPB7, RPB9, RPB10), a capping enzyme and a termination factor.

It localises to the host cytoplasm. It is found in the virion. Functionally, component of the DNA-directed RNA polymerase (RNAP) that catalyzes the transcription in the cytoplasm of viral DNA into RNA using the four ribonucleoside triphosphates as substrates. This is DNA-directed RNA polymerase RPB6 homolog from Ornithodoros (relapsing fever ticks).